Here is a 400-residue protein sequence, read N- to C-terminus: Putative C-type lectin domain family 20 member A (400 aa).

Positions methionine 1 to serine 20 are cleaved as a signal peptide. C-type lectin domains follow at residues leucine 26 to tyrosine 131 and isoleucine 159 to phenylalanine 275. 4 cysteine pairs are disulfide-bonded: cysteine 40–cysteine 130, cysteine 105–cysteine 122, cysteine 180–cysteine 274, and cysteine 248–cysteine 266. A disordered region spans residues glutamate 287 to glycine 346.

This is Putative C-type lectin domain family 20 member A from Homo sapiens (Human).